Here is a 658-residue protein sequence, read N- to C-terminus: Threonine--tRNA ligase (658 aa).

In terms of domain architecture, TGS spans 1–63 (MDQITITFPD…DDNASIDFVA (63 aa)). The tract at residues 245-548 (DHRKLGRELD…LIEHYAGNFP (304 aa)) is catalytic. Zn(2+)-binding residues include C341, H392, and H525.

This sequence belongs to the class-II aminoacyl-tRNA synthetase family. As to quaternary structure, homodimer. Requires Zn(2+) as cofactor.

Its subcellular location is the cytoplasm. The enzyme catalyses tRNA(Thr) + L-threonine + ATP = L-threonyl-tRNA(Thr) + AMP + diphosphate + H(+). Its function is as follows. Catalyzes the attachment of threonine to tRNA(Thr) in a two-step reaction: L-threonine is first activated by ATP to form Thr-AMP and then transferred to the acceptor end of tRNA(Thr). Also edits incorrectly charged L-seryl-tRNA(Thr). This chain is Threonine--tRNA ligase, found in Rhodopseudomonas palustris (strain ATCC BAA-98 / CGA009).